Reading from the N-terminus, the 149-residue chain is MEDNAFTGAYSYNLDEKGRLMLPARLRVALSDTRLVLTCAIESCLWVFPRAQWDRFSSQISARASLFHAPSRAVLRRLIAPAQEVELDRAWRLFIPPSLREYAALEKDCLILGLSHCLEIWDRARYRAYLAESEADFRAGTETLQDLCL.

SpoVT-AbrB domains follow at residues 9–52 and 82–125; these read AYSY…PRAQ and AQEV…DRAR.

It belongs to the MraZ family. Forms oligomers.

It localises to the cytoplasm. Its subcellular location is the nucleoid. The chain is Transcriptional regulator MraZ from Treponema pallidum subsp. pallidum (strain SS14).